The primary structure comprises 167 residues: Protein-export protein SecB (167 aa).

The protein belongs to the SecB family. Homotetramer, a dimer of dimers. One homotetramer interacts with 1 SecA dimer.

It is found in the cytoplasm. Functionally, one of the proteins required for the normal export of preproteins out of the cell cytoplasm. It is a molecular chaperone that binds to a subset of precursor proteins, maintaining them in a translocation-competent state. It also specifically binds to its receptor SecA. The polypeptide is Protein-export protein SecB (Cellvibrio japonicus (strain Ueda107) (Pseudomonas fluorescens subsp. cellulosa)).